The primary structure comprises 225 residues: UPF0758 protein BCE33L4198 (225 aa).

The MPN domain maps to 103–225 (SIRNPEDCAR…FVSLKEKGHI (123 aa)). 3 residues coordinate Zn(2+): His-174, His-176, and Asp-187. A JAMM motif motif is present at residues 174-187 (HNHPSGDPAPSRED).

The protein belongs to the UPF0758 family.

This chain is UPF0758 protein BCE33L4198, found in Bacillus cereus (strain ZK / E33L).